The chain runs to 1016 residues: Mastermind-like protein 1 (1016 aa).

The required for interaction with NOTCH proteins stretch occupies residues 1–123 (MVLPTCPMAE…NLDSATSPQN (123 aa)). The residue at position 45 (Ser45) is a Phosphoserine. Disordered regions lie at residues 65-184 (QAKA…LGLD), 263-487 (PDED…PSHV), 561-617 (KPKP…SQQQ), 658-681 (EKQQFQRHLTRPPPQYQDPTQGSF), and 796-953 (AYGQ…GGRA). A compositionally biased stretch (basic residues) spans 67 to 76 (KAKRAGKHRQ). The segment covering 93–115 (DAADGPEHGRPATHLHDTVKRNL) has biased composition (basic and acidic residues). The segment covering 116–129 (DSATSPQNGDQQNG) has biased composition (polar residues). Ser120 carries the post-translational modification Phosphoserine. Basic and acidic residues predominate over residues 263–282 (PDEDMKDLFNEDFEEKKDPE). Residues 283–292 (SSGSATQTPL) are compositionally biased toward polar residues. Ser303 and Ser314 each carry phosphoserine. Residues 322–353 (AGQTFLGPSSAPVSTDSPSLGGSQTLFHTSGQ) are compositionally biased toward polar residues. Position 360 is a phosphoserine (Ser360). A compositionally biased stretch (polar residues) spans 392–403 (ELSSAHQLQQIA). Low complexity predominate over residues 413–426 (QNPQQATPAPAPGQ). 4 stretches are compositionally biased toward polar residues: residues 427 to 439 (MSTWQQTGPSHSS), 451 to 463 (SPSSYKQDFTNSK), 577 to 595 (QEQNPSSVPVQAQATSVGT), and 602 to 617 (VASSHNSSPYLSSQQQ). Over residues 801–810 (SLGSSGLSQQ) the composition is skewed to low complexity. An N6-acetyllysine modification is found at Lys822. Residues 834–885 (GQNSSWQHQGMPNLSGQTPGNSNVSPFTAASSFHMQQQAHLKMSSPQFSQAV) show a composition bias toward polar residues. Ser1015 is subject to Phosphoserine.

It belongs to the mastermind family. As to quaternary structure, interacts (via N-terminus) with NOTCH1, NOTCH2, NOTCH3 and NOTCH4 (via ankyrin repeat region). Interacts (via N-terminus) with p53 (via DNA-binding region). Forms a DNA-binding complex with Notch proteins and RBPSUH/RBP-J kappa/CBF1. Also binds CREBBP/CBP and CDK8. Forms a complex with PRAG1, NOTCH1 and MAML1, in a MAML1-dependent manner. In terms of tissue distribution, widely expressed with highest levels in heart, pancreas, peripheral blood leukocytes and spleen.

It is found in the nucleus speckle. Functionally, acts as a transcriptional coactivator for NOTCH proteins. Has been shown to amplify NOTCH-induced transcription of HES1. Enhances phosphorylation and proteolytic turnover of the NOTCH intracellular domain in the nucleus through interaction with CDK8. Binds to CREBBP/CBP which promotes nucleosome acetylation at NOTCH enhancers and activates transcription. Induces phosphorylation and localization of CREBBP to nuclear foci. Plays a role in hematopoietic development by regulating NOTCH-mediated lymphoid cell fate decisions. This Homo sapiens (Human) protein is Mastermind-like protein 1.